Reading from the N-terminus, the 551-residue chain is Preprotein translocase subunit SCY1, chloroplastic (551 aa).

Residues 1–67 (MITVSEVSSY…WNLGLVINSR (67 aa)) constitute a chloroplast transit peptide. Helical transmembrane passes span 142-162 (FLKL…PLGG), 192-212 (LGIC…FQLL), 241-261 (ASVG…RPYV), 268-288 (WVVS…YIGE), 295-315 (LGNG…PASF), 328-348 (YTGL…IVYV), 382-402 (SAGV…ATLA), 415-435 (FALT…IAFF), 482-502 (VLGS…EQIT), and 503-523 (HLTA…GCAT).

This sequence belongs to the SecY/SEC61-alpha family. In terms of assembly, part of the Sec protein translocation apparatus. Interacts with SECE1, ALB3 and probably with SECA1.

It is found in the plastid. It localises to the chloroplast thylakoid membrane. In terms of biological role, involved in protein export. Probably interacts with other proteins to allow the translocation of proteins across the chloroplast thylakoid membranes. Required for normal greening during embryogenesis. Central subunit of the protein translocation channel SecYE. Consists of two halves formed by TMs 1-5 and 6-10. These two domains form a lateral gate at the front which open onto the bilayer between TMs 2 and 7, and are clamped together by SecE at the back. The channel is closed by both a pore ring composed of hydrophobic SecY resides and a short helix (helix 2A) on the extracellular side of the membrane which forms a plug. The protein is Preprotein translocase subunit SCY1, chloroplastic (SCY1) of Arabidopsis thaliana (Mouse-ear cress).